Here is a 146-residue protein sequence, read N- to C-terminus: uncharacterized protein (146 aa).

Residues 7-146 (LQINYKTDEL…EGHDILIWNP (140 aa)) enclose the N-acetyltransferase domain.

This is an uncharacterized protein from Staphylococcus epidermidis (strain ATCC 35984 / DSM 28319 / BCRC 17069 / CCUG 31568 / BM 3577 / RP62A).